Here is a 267-residue protein sequence, read N- to C-terminus: Thiamine thiazole synthase (267 aa).

Residues serine 41, 60 to 61 (ER), glycine 68, valine 132, and 160 to 162 (HVD) each bind NAD(+). Fe cation is bound by residues aspartate 162 and histidine 177. Methionine 227 is an NAD(+) binding site. Arginine 237 contacts glycine.

The protein belongs to the THI4 family. As to quaternary structure, homooctamer; tetramer of dimers. Fe(2+) is required as a cofactor.

The catalysed reaction is hydrogen sulfide + glycine + NAD(+) = ADP-5-ethyl-4-methylthiazole-2-carboxylate + nicotinamide + 3 H2O + H(+). It functions in the pathway cofactor biosynthesis; thiamine diphosphate biosynthesis. Its function is as follows. Involved in the biosynthesis of the thiazole moiety of thiamine. Catalyzes the conversion of NAD and glycine to adenosine diphosphate 5-(2-hydroxyethyl)-4-methylthiazole-2-carboxylate (ADT), an adenylated thiazole intermediate, using free sulfide as a source of sulfur. This is Thiamine thiazole synthase from Saccharolobus islandicus (strain L.S.2.15 / Lassen #1) (Sulfolobus islandicus).